We begin with the raw amino-acid sequence, 520 residues long: L-cysteine:1D-myo-inositol 2-amino-2-deoxy-alpha-D-glucopyranoside ligase (520 aa).

Position 48 (cysteine 48) interacts with Zn(2+). Residues 48–51 (CGIT), threonine 63, and 86–88 (NVT) each bind L-cysteinyl-5'-AMP. The 'HIGH' region signature appears at 50-60 (ITPYDSTHLGH). Residues 192–197 (ERGGDP) carry the 'ERGGDP' region motif. An L-cysteinyl-5'-AMP-binding site is contributed by tryptophan 232. Residue cysteine 236 coordinates Zn(2+). 254–256 (GED) provides a ligand contact to L-cysteinyl-5'-AMP. Histidine 261 serves as a coordination point for Zn(2+). An L-cysteinyl-5'-AMP-binding site is contributed by isoleucine 288. The 'KMSKS' region motif lies at 294–298 (KMSKS).

Belongs to the class-I aminoacyl-tRNA synthetase family. MshC subfamily. In terms of assembly, monomer. Zn(2+) is required as a cofactor.

The catalysed reaction is 1D-myo-inositol 2-amino-2-deoxy-alpha-D-glucopyranoside + L-cysteine + ATP = 1D-myo-inositol 2-(L-cysteinylamino)-2-deoxy-alpha-D-glucopyranoside + AMP + diphosphate + H(+). Functionally, catalyzes the ATP-dependent condensation of GlcN-Ins and L-cysteine to form L-Cys-GlcN-Ins. The protein is L-cysteine:1D-myo-inositol 2-amino-2-deoxy-alpha-D-glucopyranoside ligase of Corynebacterium kroppenstedtii (strain DSM 44385 / JCM 11950 / CIP 105744 / CCUG 35717).